We begin with the raw amino-acid sequence, 162 residues long: MKLNEIRDNEGATKNRMRVGRGIGSGKGKTAGRGVKGQKARTGVAIKGFEGGQMPLHRRLPKRGFTNPGATDLNEVNIGRIQQAVDAGKLDPSAPVTVEALLAAGIVSRVRDGVKILGVGELSAKLTFQVARASKSAVAAIEKAGGSVTQSLAATDGAVASA.

Over residues 1 to 13 the composition is skewed to basic and acidic residues; it reads MKLNEIRDNEGAT. The tract at residues 1–37 is disordered; the sequence is MKLNEIRDNEGATKNRMRVGRGIGSGKGKTAGRGVKG. Positions 21–35 are enriched in gly residues; sequence RGIGSGKGKTAGRGV.

Belongs to the universal ribosomal protein uL15 family. In terms of assembly, part of the 50S ribosomal subunit.

Functionally, binds to the 23S rRNA. The polypeptide is Large ribosomal subunit protein uL15 (Methylobacterium nodulans (strain LMG 21967 / CNCM I-2342 / ORS 2060)).